A 327-amino-acid chain; its full sequence is L-serine dehydratase/L-threonine deaminase (327 aa).

A2 carries the N-acetylalanine modification. K41 bears the N6-(pyridoxal phosphate)lysine mark. Residue P128 participates in pyridoxal 5'-phosphate binding.

Belongs to the serine/threonine dehydratase family. As to quaternary structure, homodimer. Pyridoxal 5'-phosphate serves as cofactor.

Its subcellular location is the cytoplasm. The enzyme catalyses L-serine = pyruvate + NH4(+). It catalyses the reaction L-threonine = 2-oxobutanoate + NH4(+). It participates in carbohydrate biosynthesis; gluconeogenesis. Its function is as follows. Catalyzes the pyridoxal-phosphate-dependent dehydrative deamination of L-threonine and L-serine to ammonia and alpha-ketobutyrate and pyruvate, respectively. This Mus musculus (Mouse) protein is L-serine dehydratase/L-threonine deaminase (Sds).